Here is a 122-residue protein sequence, read N- to C-terminus: Structural protein p14.5 (122 aa).

Disordered stretches follow at residues 1–27 (MADFNSPIQYLKEDSRDRTSIGSLEYD) and 73–122 (EDNN…HKSK). At A2 the chain carries N-acetylalanine; by host. Residues 105–122 (KPKKKKHLFPKLSSHKSK) are compositionally biased toward basic residues.

It belongs to the asfivirus structural protein p14.5 family. As to quaternary structure, interacts with the major capsid protein. Interacts with host IRF3; this interaction interferes with the recruitment of IRF3 to TBK1. Acetylated.

It localises to the virion. In terms of biological role, structural protein required for transport of intracellular particles from the assembly sites to the plasma membrane. Binds to both ssDNA and dsDNA. Suppressed the activation of the cGAS/STING pathway by interfering with the recruitment of IRF3 to TBK1, which in turn suppresses IRF3 phosphorylation, decreasing interferon production. The protein is Structural protein p14.5 of African swine fever virus (isolate Warthog/Namibia/Wart80/1980) (ASFV).